The chain runs to 341 residues: Type II methyltransferase M.NgoPII (341 aa).

Residues 12-341 (MKIISLFSGC…AAAIKKTLER (330 aa)) form the SAM-dependent MTase C5-type domain. Cys84 is an active-site residue.

It belongs to the class I-like SAM-binding methyltransferase superfamily. C5-methyltransferase family.

It carries out the reaction a 2'-deoxycytidine in DNA + S-adenosyl-L-methionine = a 5-methyl-2'-deoxycytidine in DNA + S-adenosyl-L-homocysteine + H(+). In terms of biological role, a methylase that recognizes the double-stranded sequence 5'-GGCC-3', methylates C-3 on both strands, and protects the DNA from cleavage by the NgoPII endonuclease. The sequence is that of Type II methyltransferase M.NgoPII (ngoPIIM) from Neisseria gonorrhoeae.